A 668-amino-acid polypeptide reads, in one-letter code: tRNA 5-methylaminomethyl-2-thiouridine biosynthesis bifunctional protein MnmC (668 aa).

Residues 1–245 (MKHYAIQPAN…KREMLCGVME (245 aa)) are tRNA (mnm(5)s(2)U34)-methyltransferase. Residues 270 to 668 (IGGGIASALL…LLKGKAVKAG (399 aa)) form an FAD-dependent cmnm(5)s(2)U34 oxidoreductase region.

In the N-terminal section; belongs to the methyltransferase superfamily. tRNA (mnm(5)s(2)U34)-methyltransferase family. The protein in the C-terminal section; belongs to the DAO family. The cofactor is FAD.

The protein resides in the cytoplasm. It catalyses the reaction 5-aminomethyl-2-thiouridine(34) in tRNA + S-adenosyl-L-methionine = 5-methylaminomethyl-2-thiouridine(34) in tRNA + S-adenosyl-L-homocysteine + H(+). Its function is as follows. Catalyzes the last two steps in the biosynthesis of 5-methylaminomethyl-2-thiouridine (mnm(5)s(2)U) at the wobble position (U34) in tRNA. Catalyzes the FAD-dependent demodification of cmnm(5)s(2)U34 to nm(5)s(2)U34, followed by the transfer of a methyl group from S-adenosyl-L-methionine to nm(5)s(2)U34, to form mnm(5)s(2)U34. In Escherichia coli O139:H28 (strain E24377A / ETEC), this protein is tRNA 5-methylaminomethyl-2-thiouridine biosynthesis bifunctional protein MnmC.